Consider the following 573-residue polypeptide: LysM domain-containing protein ARB_01155/01156 (573 aa).

An N-terminal signal peptide occupies residues 1 to 18; that stretch reads MIPRNLISGLFLLPFVVA. 3 N-linked (GlcNAc...) asparagine glycosylation sites follow: asparagine 46, asparagine 71, and asparagine 283. The 47-residue stretch at 373 to 419 folds into the LysM domain; it reads RYYEVVAGDQCNTIALHFGITVDAFLSLNTQIDERCSNLWIAYAYCV. The interval 375 to 405 is lysM domain; sequence YEVVAGDQCNTIALHFGITVDAFLSLNTQID.

It is found in the secreted. Might have a role in sequestration of chitin oligosaccharides (breakdown products of fungal cell walls that are released during invasion and act as triggers of host immunity) to dampen host defense. This is LysM domain-containing protein ARB_01155/01156 from Arthroderma benhamiae (strain ATCC MYA-4681 / CBS 112371) (Trichophyton mentagrophytes).